Reading from the N-terminus, the 228-residue chain is Heptaprenylglyceryl phosphate synthase (228 aa).

Lys12 contacts sn-glycerol 1-phosphate. Residues Asp14 and Ser40 each contribute to the Mg(2+) site. Residues 159–164, Gly189, and 209–210 each bind sn-glycerol 1-phosphate; these read YLEYSG and GN.

This sequence belongs to the GGGP/HepGP synthase family. Group I subfamily. In terms of assembly, homodimer. Mg(2+) is required as a cofactor.

It carries out the reaction sn-glycerol 1-phosphate + all-trans-heptaprenyl diphosphate = 3-heptaprenyl-sn-glycero-1-phosphate + diphosphate. It participates in membrane lipid metabolism; glycerophospholipid metabolism. Its function is as follows. Prenyltransferase that catalyzes in vivo the transfer of the heptaprenyl moiety of heptaprenyl pyrophosphate (HepPP; 35 carbon atoms) to the C3 hydroxyl of sn-glycerol-1-phosphate (G1P), producing heptaprenylglyceryl phosphate (HepGP). This reaction is an ether-bond-formation step in the biosynthesis of archaea-type G1P-based membrane lipids found in Bacillales. This chain is Heptaprenylglyceryl phosphate synthase, found in Bacillus licheniformis (strain ATCC 14580 / DSM 13 / JCM 2505 / CCUG 7422 / NBRC 12200 / NCIMB 9375 / NCTC 10341 / NRRL NRS-1264 / Gibson 46).